The primary structure comprises 196 residues: Probable nicotinate-nucleotide adenylyltransferase (196 aa).

This sequence belongs to the NadD family.

It carries out the reaction nicotinate beta-D-ribonucleotide + ATP + H(+) = deamido-NAD(+) + diphosphate. It functions in the pathway cofactor biosynthesis; NAD(+) biosynthesis; deamido-NAD(+) from nicotinate D-ribonucleotide: step 1/1. In terms of biological role, catalyzes the reversible adenylation of nicotinate mononucleotide (NaMN) to nicotinic acid adenine dinucleotide (NaAD). This Caldicellulosiruptor bescii (strain ATCC BAA-1888 / DSM 6725 / KCTC 15123 / Z-1320) (Anaerocellum thermophilum) protein is Probable nicotinate-nucleotide adenylyltransferase.